The chain runs to 405 residues: L-rhamnonate dehydratase (405 aa).

The substrate site is built by His-33 and Arg-59. Mg(2+) contacts are provided by Asp-226, Glu-252, and Glu-280. His-329 functions as the Proton acceptor in the catalytic mechanism. Glu-349 provides a ligand contact to substrate.

Belongs to the mandelate racemase/muconate lactonizing enzyme family. RhamD subfamily. In terms of assembly, homooctamer; tetramer of dimers. It depends on Mg(2+) as a cofactor.

The enzyme catalyses L-rhamnonate = 2-dehydro-3-deoxy-L-rhamnonate + H2O. Functionally, catalyzes the dehydration of L-rhamnonate to 2-keto-3-deoxy-L-rhamnonate (KDR). The chain is L-rhamnonate dehydratase from Escherichia coli (strain SMS-3-5 / SECEC).